The sequence spans 158 residues: Ribonuclease H (158 aa).

Residues 3-144 (GLKQLLIFTD…CDTLAREAAE (142 aa)) form the RNase H type-1 domain. 4 residues coordinate Mg(2+): Asp12, Glu50, Asp72, and Asp136.

This sequence belongs to the RNase H family. As to quaternary structure, monomer. Requires Mg(2+) as cofactor.

It localises to the cytoplasm. It carries out the reaction Endonucleolytic cleavage to 5'-phosphomonoester.. In terms of biological role, endonuclease that specifically degrades the RNA of RNA-DNA hybrids. In Shewanella loihica (strain ATCC BAA-1088 / PV-4), this protein is Ribonuclease H.